Here is a 125-residue protein sequence, read N- to C-terminus: Fluoride-specific ion channel FluC (125 aa).

4 helical membrane-spanning segments follow: residues 6-26, 35-55, 66-86, and 100-120; these read VLVM…GLGI, FLFG…GLFA, LLLL…ALSI, and AMGY…AGYL. Positions 76 and 79 each coordinate Na(+).

Belongs to the fluoride channel Fluc/FEX (TC 1.A.43) family.

The protein localises to the cell inner membrane. The catalysed reaction is fluoride(in) = fluoride(out). With respect to regulation, na(+) is not transported, but it plays an essential structural role and its presence is essential for fluoride channel function. Functionally, fluoride-specific ion channel. Important for reducing fluoride concentration in the cell, thus reducing its toxicity. The sequence is that of Fluoride-specific ion channel FluC from Gloeobacter violaceus (strain ATCC 29082 / PCC 7421).